The chain runs to 389 residues: 3-oxo-Delta(4,5)-steroid 5-beta-reductase (389 aa).

NADP(+)-binding positions include 35–37 (TGI), 63–64 (RR), 81–82 (DI), T105, and Q143. Residues K147 and Y179 contribute to the active site. Residues Y179, I206, and 213 to 215 (SMM) each bind NADP(+).

The protein belongs to the short-chain dehydrogenases/reductases (SDR) family. Highly divergent. As to quaternary structure, homodimer.

The enzyme catalyses 5beta-cholestan-3-one + NADP(+) = cholest-4-en-3-one + NADPH + H(+). It carries out the reaction 4,5beta-dihydrocortisone + NADP(+) = cortisone + NADPH + H(+). Its function is as follows. Involved in cardenolide biosynthesis. Catalyzes the stereospecific conversion of progesterone to 5-beta-pregnane-3,20-dione. Can use progesterone, testosterone, 4-androstene-3,17-dione, cortisol and cortisone as substrates, but not pregnenolone, 21-OH-pregnenolone or isoprogesterone. NADPH could not be replaced by NADH. The chain is 3-oxo-Delta(4,5)-steroid 5-beta-reductase from Digitalis lanata (Grecian foxglove).